Here is a 459-residue protein sequence, read N- to C-terminus: DNA damage-inducible protein F (459 aa).

The next 12 membrane-spanning stretches (helical) occupy residues 2–22 (PPGVAVCFSSLFIRLVCMAFL), 29–49 (LWHLALPMIFSNITVPLLGLV), 63–83 (LGGVAVGATATSFLFMLLLFL), 111–131 (LLLALGAGALIALLRTPIIDL), 154–174 (WLSAPASLANLVLLGWLLGVQ), 180–200 (VILLVVGNILNIVLDVWLVMG), 207–227 (GAALATVIAEYATLLIGLLMV), 265–285 (LLQLCFGAITVLGARLGSDII), 289–309 (AVLMTLLTFTAYALDGFAYAV), 338–358 (IVALLFSVVYLLAGEHIIALL), 373–393 (IWQVILPVVGVWCYLLDGMFI), and 416–436 (LLTLPWLGNHALWLALTVFLA).

It belongs to the multi antimicrobial extrusion (MATE) (TC 2.A.66.1) family.

It localises to the cell inner membrane. This Escherichia coli (strain K12) protein is DNA damage-inducible protein F (dinF).